The chain runs to 109 residues: uncharacterized protein (109 aa).

A helical transmembrane segment spans residues 75 to 95; sequence MALFHTVFILWPHFCGILWTV.

The protein resides in the membrane. This is an uncharacterized protein from Saccharomyces cerevisiae (strain ATCC 204508 / S288c) (Baker's yeast).